Consider the following 29-residue polypeptide: Prolamin alpha-1 (29 aa).

This Dactylis glomerata (Orchard grass) protein is Prolamin alpha-1.